The chain runs to 139 residues: Large ribosomal subunit protein uL22c (139 aa).

This sequence belongs to the universal ribosomal protein uL22 family. Part of the 50S ribosomal subunit.

The protein localises to the plastid. It localises to the chloroplast. Its function is as follows. This protein binds specifically to 23S rRNA. Functionally, the globular domain of the protein is located near the polypeptide exit tunnel on the outside of the subunit, while an extended beta-hairpin is found that lines the wall of the exit tunnel in the center of the 70S ribosome. This Cycas taitungensis (Prince sago) protein is Large ribosomal subunit protein uL22c (rpl22).